The sequence spans 405 residues: Acetate kinase (405 aa).

Asn-7 is a Mg(2+) binding site. Position 14 (Lys-14) interacts with ATP. Position 92 (Arg-92) interacts with substrate. The active-site Proton donor/acceptor is Asp-149. ATP contacts are provided by residues 209 to 213 (HLGNG) and 284 to 286 (DMR). Glu-389 contacts Mg(2+).

Belongs to the acetokinase family. As to quaternary structure, homodimer. Mg(2+) is required as a cofactor. It depends on Mn(2+) as a cofactor.

The protein resides in the cytoplasm. It carries out the reaction acetate + ATP = acetyl phosphate + ADP. Its pathway is metabolic intermediate biosynthesis; acetyl-CoA biosynthesis; acetyl-CoA from acetate: step 1/2. Catalyzes the formation of acetyl phosphate from acetate and ATP. Can also catalyze the reverse reaction. This chain is Acetate kinase, found in Borreliella burgdorferi (strain ZS7) (Borrelia burgdorferi).